Consider the following 198-residue polypeptide: dTTP/UTP pyrophosphatase (198 aa).

Aspartate 69 (proton acceptor) is an active-site residue.

It belongs to the Maf family. YhdE subfamily. A divalent metal cation serves as cofactor.

The protein resides in the cytoplasm. It catalyses the reaction dTTP + H2O = dTMP + diphosphate + H(+). It carries out the reaction UTP + H2O = UMP + diphosphate + H(+). Nucleoside triphosphate pyrophosphatase that hydrolyzes dTTP and UTP. May have a dual role in cell division arrest and in preventing the incorporation of modified nucleotides into cellular nucleic acids. In Idiomarina loihiensis (strain ATCC BAA-735 / DSM 15497 / L2-TR), this protein is dTTP/UTP pyrophosphatase.